A 316-amino-acid polypeptide reads, in one-letter code: Transaldolase (316 aa).

The Schiff-base intermediate with substrate role is filled by K131.

Belongs to the transaldolase family. Type 1 subfamily. As to quaternary structure, homodimer.

Its subcellular location is the cytoplasm. The catalysed reaction is D-sedoheptulose 7-phosphate + D-glyceraldehyde 3-phosphate = D-erythrose 4-phosphate + beta-D-fructose 6-phosphate. It participates in carbohydrate degradation; pentose phosphate pathway; D-glyceraldehyde 3-phosphate and beta-D-fructose 6-phosphate from D-ribose 5-phosphate and D-xylulose 5-phosphate (non-oxidative stage): step 2/3. In terms of biological role, transaldolase is important for the balance of metabolites in the pentose-phosphate pathway. This chain is Transaldolase, found in Glaesserella parasuis serovar 5 (strain SH0165) (Haemophilus parasuis).